The primary structure comprises 106 residues: YcgL domain-containing protein HCH_02617 (106 aa).

The YcgL domain occupies 6-90 (RLISIFRSSK…VQDDYMMDVV (85 aa)).

The polypeptide is YcgL domain-containing protein HCH_02617 (Hahella chejuensis (strain KCTC 2396)).